We begin with the raw amino-acid sequence, 332 residues long: tRNA (cytosine(38)-C(5))-methyltransferase (332 aa).

The SAM-dependent MTase C5-type domain maps to 3 to 332 (HKILELYSGI…ISELLKILFE (330 aa)). S-adenosyl-L-homocysteine-binding positions include 12–14 (IGG), 33–34 (DI), 55–56 (NI), and S75. The active site involves C78. Residues Q79, S97, and 316–317 (NS) each bind S-adenosyl-L-homocysteine.

It belongs to the class I-like SAM-binding methyltransferase superfamily. C5-methyltransferase family.

The protein resides in the cytoplasm. It is found in the nucleus. The enzyme catalyses cytidine(38) in tRNA + S-adenosyl-L-methionine = 5-methylcytidine(38) in tRNA + S-adenosyl-L-homocysteine + H(+). The catalysed reaction is a 2'-deoxycytidine in DNA + S-adenosyl-L-methionine = a 5-methyl-2'-deoxycytidine in DNA + S-adenosyl-L-homocysteine + H(+). Its function is as follows. Specifically methylates cytosine 38 in the anticodon loop of tRNA(Asp). Also has DNA (cytosine-5)-methyltransferase activity. Shows affinity for both tRNA(Asp) and DNA substrates. This Spodoptera frugiperda (Fall armyworm) protein is tRNA (cytosine(38)-C(5))-methyltransferase.